Reading from the N-terminus, the 377-residue chain is Virion membrane protein A16 (377 aa).

A lipid anchor (N-myristoyl glycine; by host) is attached at Gly-2. Over 2–341 (GAAVTLNRIK…VVKDKIKLPT (340 aa)) the chain is Virion surface. Residues 342-362 (WLGAAITLVVISVIFYFISIY) traverse the membrane as a helical; Signal-anchor for type II membrane protein segment. Residues 363 to 377 (SRTKIKTNDINVRRR) lie on the Intravirion side of the membrane.

This sequence belongs to the poxviridae A16/G9/J5 family. Part of a stable entry-fusion complex (EFC) which is at least composed of proteins A16, A21, A28, G3, G9, H2, J5, and L5. Formation of the viral membrane is necessary for the assembly of the complex. Interacts with G9. In terms of processing, most cysteines are linked by disulfide bonds. They are created by the viral disulfide bond formation pathway, a poxvirus-specific redox pathway that operates on the cytoplasmic side of the MV membranes.

The protein resides in the virion membrane. Functionally, envelope protein part of the entry-fusion complex responsible for the virus membrane fusion with host cell membrane during virus entry. Also plays a role in cell-cell fusion (syncytium formation). This is Virion membrane protein A16 from Homo sapiens (Human).